We begin with the raw amino-acid sequence, 151 residues long: UPF0178 protein VSAL_I0701 (151 aa).

Belongs to the UPF0178 family.

The sequence is that of UPF0178 protein VSAL_I0701 from Aliivibrio salmonicida (strain LFI1238) (Vibrio salmonicida (strain LFI1238)).